Reading from the N-terminus, the 171-residue chain is Protein BTG1 (171 aa).

Position 159 is a phosphoserine (serine 159).

The protein belongs to the BTG family. As to quaternary structure, interacts with CNOT7 and CNOT8.

Its function is as follows. Anti-proliferative protein. The sequence is that of Protein BTG1 (BTG1) from Homo sapiens (Human).